The chain runs to 264 residues: Thymidylate synthase (264 aa).

Residue Arg-21 participates in dUMP binding. His-51 contributes to the (6R)-5,10-methylene-5,6,7,8-tetrahydrofolate binding site. 126–127 (RR) contributes to the dUMP binding site. Cys-146 (nucleophile) is an active-site residue. DUMP-binding positions include 166 to 169 (RSCD), Asn-177, and 207 to 209 (HLY). Residue Asp-169 coordinates (6R)-5,10-methylene-5,6,7,8-tetrahydrofolate. Residue Ala-263 participates in (6R)-5,10-methylene-5,6,7,8-tetrahydrofolate binding.

The protein belongs to the thymidylate synthase family. Bacterial-type ThyA subfamily. Homodimer.

It is found in the cytoplasm. The catalysed reaction is dUMP + (6R)-5,10-methylene-5,6,7,8-tetrahydrofolate = 7,8-dihydrofolate + dTMP. It functions in the pathway pyrimidine metabolism; dTTP biosynthesis. In terms of biological role, catalyzes the reductive methylation of 2'-deoxyuridine-5'-monophosphate (dUMP) to 2'-deoxythymidine-5'-monophosphate (dTMP) while utilizing 5,10-methylenetetrahydrofolate (mTHF) as the methyl donor and reductant in the reaction, yielding dihydrofolate (DHF) as a by-product. This enzymatic reaction provides an intracellular de novo source of dTMP, an essential precursor for DNA biosynthesis. This Shewanella baltica (strain OS185) protein is Thymidylate synthase.